Consider the following 390-residue polypeptide: Phosphopentomutase (390 aa).

Aspartate 11, aspartate 283, histidine 288, aspartate 324, histidine 325, and histidine 336 together coordinate Mn(2+).

Belongs to the phosphopentomutase family. Mn(2+) serves as cofactor.

The protein localises to the cytoplasm. It catalyses the reaction 2-deoxy-alpha-D-ribose 1-phosphate = 2-deoxy-D-ribose 5-phosphate. The enzyme catalyses alpha-D-ribose 1-phosphate = D-ribose 5-phosphate. It functions in the pathway carbohydrate degradation; 2-deoxy-D-ribose 1-phosphate degradation; D-glyceraldehyde 3-phosphate and acetaldehyde from 2-deoxy-alpha-D-ribose 1-phosphate: step 1/2. Functionally, isomerase that catalyzes the conversion of deoxy-ribose 1-phosphate (dRib-1-P) and ribose 1-phosphate (Rib-1-P) to deoxy-ribose 5-phosphate (dRib-5-P) and ribose 5-phosphate (Rib-5-P), respectively. The chain is Phosphopentomutase from Alkaliphilus oremlandii (strain OhILAs) (Clostridium oremlandii (strain OhILAs)).